The chain runs to 268 residues: Chymotrypsin-C (268 aa).

Positions 1–16 are cleaved as a signal peptide; the sequence is MLGITVLAAILACASC. The propeptide at 17–29 is activation peptide; it reads CGNPAFPPNLSTR. Disulfide bonds link C17/C141, C59/C75, C155/C222, C186/C202, and C212/C243. N25 carries an N-linked (GlcNAc...) asparagine glycan. The Peptidase S1 domain maps to 30-267; sequence VVGGEDAVPN…YNDWINEKIQ (238 aa). The Charge relay system role is filled by H74. N90 carries an N-linked (GlcNAc...) asparagine glycan. D121 serves as the catalytic Charge relay system. Residue S216 is the Charge relay system of the active site.

It belongs to the peptidase S1 family. Elastase subfamily. As to expression, pancreas.

The catalysed reaction is Preferential cleavage: Leu-|-Xaa, Tyr-|-Xaa, Phe-|-Xaa, Met-|-Xaa, Trp-|-Xaa, Gln-|-Xaa, Asn-|-Xaa.. Its function is as follows. Regulates activation and degradation of trypsinogens and procarboxypeptidases by targeting specific cleavage sites within their zymogen precursors. Has chymotrypsin-type protease activity and hypocalcemic activity. Cleaves TRY4 and TRY5 and thereby inhibits their autoactivation. This chain is Chymotrypsin-C (Ctrc), found in Rattus norvegicus (Rat).